Consider the following 873-residue polypeptide: Zinc fingers and homeoboxes protein 1 (873 aa).

Residues 24-63 form a disordered region; it reads LISDLDEGPPVLTPVENTRAESISSDEEVHESVDSDNQQN. Thr-36 carries the post-translational modification Phosphothreonine. Phosphoserine is present on residues Ser-45, Ser-47, and Ser-48. 2 consecutive C2H2-type zinc fingers follow at residues 70–93 and 102–125; these read YECKYCTFQTPDLNMFTFHVDSEH and YVCVECNFLTKRYDALSEHNLKYH. Residue Lys-159 forms a Glycyl lysine isopeptide (Lys-Gly) (interchain with G-Cter in SUMO2) linkage. The disordered stretch occupies residues 200–236; it reads HNSVEDVPEEKENEIKPDREEIVENPSSSASESNTST. Ser-202 bears the Phosphoserine mark. The segment covering 212-221 has biased composition (basic and acidic residues); that stretch reads NEIKPDREEI. A compositionally biased stretch (low complexity) spans 223 to 236; that stretch reads ENPSSSASESNTST. Residues 272-432 are required for dimerization; that stretch reads NSNLIPKVLI…QNNIQKSQVP (161 aa). Positions 272–564 are required for interaction with NFYA; the sequence is NSNLIPKVLI…AQPKQSWNPF (293 aa). Positions 284-346 form a DNA-binding region, homeobox 1; it reads NSIPTYNAAL…LKHGVSWTPE (63 aa). Glycyl lysine isopeptide (Lys-Gly) (interchain with G-Cter in SUMO2) cross-links involve residues Lys-441, Lys-454, Lys-485, and Lys-629. 2 consecutive DNA-binding regions (homeobox) follow at residues 464 to 526 and 569 to 630; these read SFGI…KSNQ and PQKF…EEKM. Disordered stretches follow at residues 626–667 and 732–769; these read KEEK…ICKK and SSMNGLSSLRKRGRGRPKGRGRGRPRGRPRGSKRINNW. Ser-648 carries the phosphoserine modification. The segment at residues 660–722 is a DNA-binding region (homeobox 4); the sequence is STGKICKKTP…YAWKNGNLKW (63 aa). Positions 734–768 are required for nuclear localization; that stretch reads MNGLSSLRKRGRGRPKGRGRGRPRGRPRGSKRINN. Basic residues predominate over residues 740–764; the sequence is LRKRGRGRPKGRGRGRPRGRPRGSK. Ser-774 carries the phosphoserine modification. The homeobox 5 DNA-binding region spans 777 to 832; that stretch reads KFKTGTAILKDYYLKHKFLNEQDLDELVNKSHMGYEQVREWFAERQRRSELGIELF. Positions 829-873 are disordered; sequence IELFEENEEEDEVIDDQEEDEEETDDSDTWEPPRHVKRKLSKSDD. Acidic residues predominate over residues 831–857; sequence LFEENEEEDEVIDDQEEDEEETDDSDT. Residues 831–873 are required for repressor activity; it reads LFEENEEEDEVIDDQEEDEEETDDSDTWEPPRHVKRKLSKSDD. A compositionally biased stretch (basic residues) spans 863–873; it reads HVKRKLSKSDD.

This sequence belongs to the ZHX family. Forms homodimers. Heterodimer (via HD1 domain) with ZHX2 (via HD1 domain). Also forms a heterodimer with ZHX3 which is a prerequisite for repressor activity. Interacts with ATF7IP and NFYA. Interacts (via homeobox domains) with DNMT3B (via PWWP domain).

Its subcellular location is the nucleus. Functionally, acts as a transcriptional repressor. Increases DNMT3B-mediated repressive transcriptional activity when DNMT3B is tethered to DNA. May link molecule between DNMT3B and other co-repressor proteins. In Pan troglodytes (Chimpanzee), this protein is Zinc fingers and homeoboxes protein 1 (ZHX1).